Here is a 95-residue protein sequence, read N- to C-terminus: Small ribosomal subunit protein uS17 (95 aa).

It belongs to the universal ribosomal protein uS17 family. In terms of assembly, part of the 30S ribosomal subunit.

One of the primary rRNA binding proteins, it binds specifically to the 5'-end of 16S ribosomal RNA. This is Small ribosomal subunit protein uS17 from Mesomycoplasma hyopneumoniae (strain 7448) (Mycoplasma hyopneumoniae).